The chain runs to 282 residues: Undecaprenyl-diphosphatase (282 aa).

The next 7 helical transmembrane spans lie at 39-59, 85-105, 115-135, 153-173, 196-216, 230-250, and 260-280; these read PGAAFTAIVQMGTLAAVLIYF, ATMGWMIAAGTIPIVFFGLLF, SLYWISAALIGLALILWLTEV, IGWKEALLIGVAQSIALIPGS, FSFLLSLPSVLAAALLQLYET, LLVATIAAGVVGYASIAFLIT, and FIIYRIVIGVAILGLIATGAI.

It belongs to the UppP family.

The protein resides in the cell inner membrane. The enzyme catalyses di-trans,octa-cis-undecaprenyl diphosphate + H2O = di-trans,octa-cis-undecaprenyl phosphate + phosphate + H(+). In terms of biological role, catalyzes the dephosphorylation of undecaprenyl diphosphate (UPP). Confers resistance to bacitracin. The sequence is that of Undecaprenyl-diphosphatase from Chlorobium chlorochromatii (strain CaD3).